We begin with the raw amino-acid sequence, 580 residues long: MGTTGLESLSLGDRGAAPTVTSSERLVPDPPNDLRKEDVAMELERVGEDEEQMMIKRSSECNPLLQEPIASAQFGATAGTECRKSVPCGWERVVKQRLFGKTAGRFDVYFISPQGLKFRSKSSLANYLHKNGETSLKPEDFDFTVLSKRGIKSRYKDCSMAALTSHLQNQSNNSNWNLRTRSKCKKDVFMPPSSSSELQESRGLSNFTSTHLLLKEDEGVDDVNFRKVRKPKGKVTILKGIPIKKTKKGCRKSCSGFVQSDSKRESVCNKADAESEPVAQKSQLDRTVCISDAGACGETLSVTSEENSLVKKKERSLSSGSNFCSEQKTSGIINKFCSAKDSEHNEKYEDTFLESEEIGTKVEVVERKEHLHTDILKRGSEMDNNCSPTRKDFTGEKIFQEDTIPRTQIERRKTSLYFSSKYNKEALSPPRRKAFKKWTPPRSPFNLVQETLFHDPWKLLIATIFLNRTSGKMAIPVLWKFLEKYPSAEVARTADWRDVSELLKPLGLYDLRAKTIVKFSDEYLTKQWKYPIELHGIGKYGNDSYRIFCVNEWKQVHPEDHKLNKYHDWLWENHEKLSLS.

Residues 1 to 36 (MGTTGLESLSLGDRGAAPTVTSSERLVPDPPNDLRK) are disordered. In terms of domain architecture, MBD spans 76 to 148 (ATAGTECRKS…EDFDFTVLSK (73 aa)). 2 positions are modified to phosphoserine: serine 318 and serine 428. The active site involves aspartate 560.

As to quaternary structure, interacts with MLH1.

Its subcellular location is the nucleus. Mismatch-specific DNA N-glycosylase involved in DNA repair. Has thymine glycosylase activity and is specific for G:T mismatches within methylated and unmethylated CpG sites. Can also remove uracil or 5-fluorouracil in G:U mismatches. Has no lyase activity. Was first identified as methyl-CpG-binding protein. This Homo sapiens (Human) protein is Methyl-CpG-binding domain protein 4.